A 432-amino-acid chain; its full sequence is Cyclin-A2 (432 aa).

Methionine 1 is subject to N-acetylmethionine. At serine 5 the chain carries Phosphoserine. 2 disordered regions span residues 26–45 and 55–75; these read LQED…QQPR and SGNP…VAPL. A Phosphoserine modification is found at serine 55.

It belongs to the cyclin family. Cyclin AB subfamily. In terms of assembly, interacts with the CDK1 and CDK2 protein kinases to form serine/threonine kinase holoenzyme complexes. Interacts with CDK1 (hyperphosphorylated form in G1 and underphosphorylated forms in S and G2). Interacts with CDK2; the interaction increases from G1 to G2. Interacts (associated with CDK2 but not with CDK1) with SCAPER; regulates the activity of CCNA2/CDK2 by transiently maintaining CCNA2 in the cytoplasm. Forms a ternary complex with CDK2 and CDKN1B; CDKN1B inhibits the kinase activity of CDK2 through conformational rearrangements. Interacts with INCA1. As to quaternary structure, (Microbial infection) Interacts with human cytomegalovirus protein UL32. Post-translationally, polyubiquitinated via 'Lys-11'-linked ubiquitin by the anaphase-promoting complex (APC/C), leading to its degradation by the proteasome. Deubiquitinated and stabilized by USP37 enables entry into S phase. Ubiquitinated during the G1 phase by the SCF(FBXO31) complex, leading to its proteasomal degradation.

It is found in the nucleus. It localises to the cytoplasm. Functionally, cyclin which controls both the G1/S and the G2/M transition phases of the cell cycle. Functions through the formation of specific serine/threonine protein kinase holoenzyme complexes with the cyclin-dependent protein kinases CDK1 or CDK2. The cyclin subunit confers the substrate specificity of these complexes and differentially interacts with and activates CDK1 and CDK2 throughout the cell cycle. In Homo sapiens (Human), this protein is Cyclin-A2.